A 319-amino-acid polypeptide reads, in one-letter code: Cell division protein FtsQ (319 aa).

Positions 1–53 (MDSREDMVPDVLLEAPNPRRRQSADTSTERPTRPARREQGYARVTPRGERMGN) are disordered. The Cytoplasmic segment spans residues 1–70 (MDSREDMVPD…PDFFAWFDPR (70 aa)). Positions 27–52 (STERPTRPARREQGYARVTPRGERMG) are enriched in basic and acidic residues. A helical membrane pass occupies residues 71 to 87 (WLWVPLMVCLAVGGYWA). Residues 88-319 (YEPLEKLLER…NATRNAPTHP (232 aa)) are Periplasmic-facing. Residues 97–166 (RPFKSVVVEG…DTLVVKIAEQ (70 aa)) form the POTRA domain.

The protein belongs to the FtsQ/DivIB family. FtsQ subfamily. Part of a complex composed of FtsB, FtsL and FtsQ.

It localises to the cell inner membrane. Essential cell division protein. May link together the upstream cell division proteins, which are predominantly cytoplasmic, with the downstream cell division proteins, which are predominantly periplasmic. May control correct divisome assembly. The chain is Cell division protein FtsQ from Cellvibrio japonicus (strain Ueda107) (Pseudomonas fluorescens subsp. cellulosa).